The primary structure comprises 451 residues: Proline--tRNA ligase (451 aa).

The protein belongs to the class-II aminoacyl-tRNA synthetase family. ProS type 2 subfamily. In terms of assembly, homodimer.

The protein localises to the cytoplasm. It catalyses the reaction tRNA(Pro) + L-proline + ATP = L-prolyl-tRNA(Pro) + AMP + diphosphate. Its function is as follows. Catalyzes the attachment of proline to tRNA(Pro) in a two-step reaction: proline is first activated by ATP to form Pro-AMP and then transferred to the acceptor end of tRNA(Pro). The chain is Proline--tRNA ligase from Roseobacter denitrificans (strain ATCC 33942 / OCh 114) (Erythrobacter sp. (strain OCh 114)).